Consider the following 610-residue polypeptide: Zinc metalloproteinase-disintegrin-like halysase (610 aa).

Positions 1–20 are cleaved as a signal peptide; the sequence is MIQVLLVTICLAVFPYQGSS. Positions 21-182 are excised as a propeptide; the sequence is IILESGNVND…WESYEPIKKA (162 aa). The Peptidase M12B domain maps to 199 to 395; that stretch reads KYVKLVMVAD…DMPQCILKKP (197 aa). N-linked (GlcNAc...) asparagine glycosylation occurs at N218. Intrachain disulfides connect C310-C390, C350-C374, and C352-C357. H335 lines the Zn(2+) pocket. E336 is an active-site residue. Zn(2+) is bound by residues H339 and H345. A Disintegrin domain is found at 403-488; it reads PPVCGNYFVE…AECTDRFQRN (86 aa). 6 residues coordinate Ca(2+): V405, N408, F410, E412, E415, and D418. 14 disulfide bridges follow: C406–C435, C417–C430, C419–C425, C429–C452, C443–C449, C448–C474, C461–C481, C468–C499, C492–C504, C511–C561, C526–C572, C539–C549, C556–C598, and C592–C603. A D/ECD-tripeptide motif is present at residues 467 to 469; the sequence is ECD.

It belongs to the venom metalloproteinase (M12B) family. P-III subfamily. P-IIIa sub-subfamily. As to quaternary structure, monomer. Zn(2+) is required as a cofactor. In terms of tissue distribution, expressed by the venom gland.

The protein localises to the secreted. With respect to regulation, inhibited by EDTA and EGTA. Not inhibited by PMSF, antipain, pepstatin, and iodoacetamide. Its function is as follows. Strongly inhibits the collagen-induced human platelet aggregation (inhibition of alpha-2/beta-1 (ITGA2/ITGB1) integrin). Hydrolyzes the Aalpha-chain of fibrinogen, without cleavage of Bbeta- and gamma-chains. Degrades type IV collagen (but not types I, II and V), fibronectin and vitronectin and also integrins alpha-1/beta-1 (ITGA1/ITGB1) and alpha-5/beta/1 (ITGA5/ITGB1) (but not alpha-V/beta-3 (ITGAV/ITGB3) and alpha-V/beta-5 (ITGAV/ITGB5) integrins). Both metalloproteinase (peptidase M12B) and disintegrin-like domains (recombinantly expressed and named halydin) play characteristic roles to inhibit human platelet aggregation. Induces apoptosis and strongly inhibits proliferation of endothelial cells as well as adhesion of the cells to extracellular matrix proteins. The apoptosis is closely associated with activation of caspase-3 and decreased level of Bcl-X(L)/Bax. Apohalysase, which lacks metalloprotease activity, is also able to induce the apoptosis. Cleaves insulin B chain at '34-His-|-Leu-35', '37-Glu-|-Ala-38', '38-Ala-|-Leu-39', '39-Leu-|-Tyr-40', '40-Tyr-|-Leu-41', '47-Gly-|-Phe-48' and '48-Phe-|-Phe-49' bonds. In Gloydius halys (Chinese water mocassin), this protein is Zinc metalloproteinase-disintegrin-like halysase.